The primary structure comprises 167 residues: uncharacterized protein (167 aa).

The protein resides in the mitochondrion. This is an uncharacterized protein from Marchantia polymorpha (Common liverwort).